The primary structure comprises 1247 residues: uncharacterized protein (1247 aa).

8 disordered regions span residues 25–141 (KYNN…HSPP), 169–431 (AANN…QQPQ), 472–667 (QQQP…PSSS), 738–770 (NSNS…SEPI), 807–857 (YSNR…QNIE), 869–1087 (GKNF…NNNN), 1099–1122 (STLN…ESQQ), and 1139–1162 (QQQQ…KGDG). The span at 26 to 125 (YNNSNNYNNN…SNNSINSNSY (100 aa)) shows a compositional bias: low complexity. The span at 126-139 (KVNTPTQNGKSSHS) shows a compositional bias: polar residues. Low complexity-rich tracts occupy residues 169–178 (AANNGSSNSS), 185–223 (SNSN…NYNS), and 230–341 (NNNN…YSNS). Residues 342 to 356 (KYNQQKSYNNAPHQL) show a composition bias toward polar residues. Composition is skewed to low complexity over residues 363-375 (NSYY…NNGN), 385-394 (GSGNSSNSNG), 409-431 (QSQS…QQPQ), and 472-484 (QQQP…QQQQ). Positions 511 to 522 (GLNNSLNGQTDL) are enriched in polar residues. Composition is skewed to low complexity over residues 523 to 544 (NNSN…TNNN), 553 to 628 (YNYN…VGSN), 655 to 667 (TPSS…PSSS), 738 to 759 (NSNS…NNNH), 807 to 855 (YSNR…DSQN), and 871 to 928 (NFNN…ENNN). Positions 929 to 942 (GDVFSNGFSTWTPK) are enriched in polar residues. Residues 943 to 983 (SGSNSLNNSQNNLSNGQNSSNNSQNNLNNSQNSLNSSGNHH) show a composition bias toward low complexity. A compositionally biased stretch (basic residues) spans 984 to 995 (SNYHGHNNHHHY). The segment covering 996–1021 (NNNNNNNNNNNNNNNNNNNNNNNGNG) has biased composition (low complexity). Polar residues predominate over residues 1026 to 1044 (YYNNKYQQKSPQHQSSNSV). A compositionally biased stretch (pro residues) spans 1047-1060 (IPPPGFSTIAPPPG). A compositionally biased stretch (low complexity) spans 1064–1087 (NNNNNNNNNNNNNNNKNNNSNNNN). The segment covering 1099-1108 (STLNNSQDDS) has biased composition (polar residues). Residues 1110–1122 (QQEQEQQEQESQQ) are compositionally biased toward low complexity.

This is an uncharacterized protein from Dictyostelium discoideum (Social amoeba).